Consider the following 158-residue polypeptide: Large ribosomal subunit protein bL35m (158 aa).

It belongs to the bacterial ribosomal protein bL35 family.

It is found in the mitochondrion. In Caenorhabditis elegans, this protein is Large ribosomal subunit protein bL35m (mrpl-35).